The following is a 254-amino-acid chain: Alcohol dehydrogenase (254 aa).

An N-acetylmethionine modification is found at Met1. 10–33 contacts NAD(+); that stretch reads FVAALGGIGLDTSRELVKRNLKNF. Ser138 contributes to the substrate binding site. Tyr151 (proton acceptor) is an active-site residue.

This sequence belongs to the short-chain dehydrogenases/reductases (SDR) family. Homodimer.

The enzyme catalyses a primary alcohol + NAD(+) = an aldehyde + NADH + H(+). It carries out the reaction a secondary alcohol + NAD(+) = a ketone + NADH + H(+). This chain is Alcohol dehydrogenase (Adh), found in Drosophila lebanonensis (Fruit fly).